We begin with the raw amino-acid sequence, 443 residues long: Probable serine transporter (443 aa).

At 1-48 the chain is on the cytoplasmic side; the sequence is MEIASNKGVIADASTPAGRAGMSESEWREAIKFDSTDTGWVIMSIGMA. A helical transmembrane segment spans residues 49-69; it reads IGAGIVFLPVQVGLMGLWVFL. Residues 70–110 are Periplasmic-facing; the sequence is LSSVIGYPAMYLFQRLFINTLAESPECKDYPSVISGYLGKN. The chain crosses the membrane as a helical span at residues 111–131; that stretch reads WGILLGALYFVMLVIWMFVYS. At 132–149 the chain is on the cytoplasmic side; sequence TAITNDSASYLHTFGVTE. The chain crosses the membrane as a helical span at residues 150-170; it reads GLLSDSPFYGLVLICILVAIS. The Periplasmic segment spans residues 171-182; the sequence is SRGEKLLFKIST. Residues 183-203 traverse the membrane as a helical segment; it reads GMVLTKLLVVAALGVSMVGMW. The Cytoplasmic segment spans residues 204–214; that stretch reads HLYNVGSLPPL. The helical transmembrane segment at 215–235 threads the bilayer; the sequence is GLLVKNAIITLPFTLTSILFI. The Periplasmic segment spans residues 236–264; the sequence is QTLSPMVISYRSREKSIEVARHKALRAMN. A helical membrane pass occupies residues 265 to 285; that stretch reads IAFGILFVTVFFYAVSFTLAM. At 286 to 297 the chain is on the cytoplasmic side; sequence GHDEAVKAYEQN. The next 2 helical transmembrane spans lie at 298-318 and 319-339; these read ISALAIAAQFISGDGAAWVKV and VSVILNIFAVMTAFFGVYLGF. The Cytoplasmic portion of the chain corresponds to 340–367; sequence REATQGIVMNILRRKMPAEKINENLVQR. A helical membrane pass occupies residues 368–388; that stretch reads GIMIFAILLAWSAIVLNAPVL. Serine 389 is a topological domain (periplasmic). The chain crosses the membrane as a helical span at residues 390 to 410; it reads FTSICSPIFGMVGCLIPAWLV. Over 411–421 the chain is Cytoplasmic; sequence YKVPALHKYKG. Residues 422–442 traverse the membrane as a helical segment; the sequence is MSLYLIIVTGLLLCVSPFLAF. Residue serine 443 is a topological domain, periplasmic.

This sequence belongs to the amino acid/polyamine transporter 2 family. SdaC/TdcC subfamily.

Its subcellular location is the cell inner membrane. Plays a role in L-cysteine detoxification. May transport both D- and L-serine. This Escherichia coli (strain K12) protein is Probable serine transporter (dlsT).